Reading from the N-terminus, the 207-residue chain is ATP synthase subunit b 2 (207 aa).

Positions methionine 1–glycine 31 are enriched in low complexity. The segment at methionine 1 to serine 41 is disordered. The helical transmembrane segment at alanine 48–serine 70 threads the bilayer.

The protein belongs to the ATPase B chain family. As to quaternary structure, F-type ATPases have 2 components, F(1) - the catalytic core - and F(0) - the membrane proton channel. F(1) has five subunits: alpha(3), beta(3), gamma(1), delta(1), epsilon(1). F(0) has three main subunits: a(1), b(2) and c(10-14). The alpha and beta chains form an alternating ring which encloses part of the gamma chain. F(1) is attached to F(0) by a central stalk formed by the gamma and epsilon chains, while a peripheral stalk is formed by the delta and b chains.

It is found in the cell inner membrane. Functionally, f(1)F(0) ATP synthase produces ATP from ADP in the presence of a proton or sodium gradient. F-type ATPases consist of two structural domains, F(1) containing the extramembraneous catalytic core and F(0) containing the membrane proton channel, linked together by a central stalk and a peripheral stalk. During catalysis, ATP synthesis in the catalytic domain of F(1) is coupled via a rotary mechanism of the central stalk subunits to proton translocation. Component of the F(0) channel, it forms part of the peripheral stalk, linking F(1) to F(0). This Xanthobacter autotrophicus (strain ATCC BAA-1158 / Py2) protein is ATP synthase subunit b 2.